A 171-amino-acid chain; its full sequence is 3-hydroxydecanoyl-[acyl-carrier-protein] dehydratase (171 aa).

The active site involves His-70.

The protein belongs to the thioester dehydratase family. FabA subfamily. In terms of assembly, homodimer.

The protein localises to the cytoplasm. The enzyme catalyses a (3R)-hydroxyacyl-[ACP] = a (2E)-enoyl-[ACP] + H2O. The catalysed reaction is (3R)-hydroxydecanoyl-[ACP] = (2E)-decenoyl-[ACP] + H2O. It catalyses the reaction (2E)-decenoyl-[ACP] = (3Z)-decenoyl-[ACP]. It functions in the pathway lipid metabolism; fatty acid biosynthesis. Necessary for the introduction of cis unsaturation into fatty acids. Catalyzes the dehydration of (3R)-3-hydroxydecanoyl-ACP to E-(2)-decenoyl-ACP and then its isomerization to Z-(3)-decenoyl-ACP. Can catalyze the dehydratase reaction for beta-hydroxyacyl-ACPs with saturated chain lengths up to 16:0, being most active on intermediate chain length. The chain is 3-hydroxydecanoyl-[acyl-carrier-protein] dehydratase from Pseudomonas fluorescens (strain SBW25).